The chain runs to 912 residues: Phosphoenolpyruvate carboxylase (912 aa).

Residues histidine 138 and lysine 575 contribute to the active site.

It belongs to the PEPCase type 1 family. Mg(2+) is required as a cofactor.

It carries out the reaction oxaloacetate + phosphate = phosphoenolpyruvate + hydrogencarbonate. Functionally, forms oxaloacetate, a four-carbon dicarboxylic acid source for the tricarboxylic acid cycle. In Lactobacillus acidophilus (strain ATCC 700396 / NCK56 / N2 / NCFM), this protein is Phosphoenolpyruvate carboxylase.